The chain runs to 237 residues: Proteasome subunit alpha type-5-A (237 aa).

Met1 carries the N-acetylmethionine modification. Residues Lys43 and Lys66 each participate in a glycyl lysine isopeptide (Lys-Gly) (interchain with G-Cter in ubiquitin) cross-link.

Belongs to the peptidase T1A family. Component of the 20S core complex of the 26S proteasome. The 26S proteasome is composed of a core protease (CP), known as the 20S proteasome, capped at one or both ends by the 19S regulatory particle (RP/PA700). The 20S proteasome core is composed of 28 subunits that are arranged in four stacked rings, resulting in a barrel-shaped structure. The two end rings are each formed by seven alpha subunits, and the two central rings are each formed by seven beta subunits. The catalytic chamber with the active sites is on the inside of the barrel.

The protein localises to the cytoplasm. Its subcellular location is the nucleus. In terms of biological role, the proteasome is a multicatalytic proteinase complex which is characterized by its ability to cleave peptides with Arg, Phe, Tyr, Leu, and Glu adjacent to the leaving group at neutral or slightly basic pH. The proteasome has an ATP-dependent proteolytic activity. This chain is Proteasome subunit alpha type-5-A (PAE1), found in Arabidopsis thaliana (Mouse-ear cress).